The sequence spans 295 residues: Phosphatidylglycerol--prolipoprotein diacylglyceryl transferase (295 aa).

Helical transmembrane passes span 28-48, 69-89, 101-121, and 131-151; these read WYAL…VLAT, LLTW…VLFY, ILMV…VVIA, and IPKL…LLLG. Arginine 152 is a binding site for a 1,2-diacyl-sn-glycero-3-phospho-(1'-sn-glycerol). Helical transmembrane passes span 195–215, 224–244, and 268–288; these read QLYE…WLVW, GLIT…VEFF, and GLTM…WFVL.

The protein belongs to the Lgt family.

The protein resides in the cell inner membrane. The catalysed reaction is L-cysteinyl-[prolipoprotein] + a 1,2-diacyl-sn-glycero-3-phospho-(1'-sn-glycerol) = an S-1,2-diacyl-sn-glyceryl-L-cysteinyl-[prolipoprotein] + sn-glycerol 1-phosphate + H(+). It participates in protein modification; lipoprotein biosynthesis (diacylglyceryl transfer). Functionally, catalyzes the transfer of the diacylglyceryl group from phosphatidylglycerol to the sulfhydryl group of the N-terminal cysteine of a prolipoprotein, the first step in the formation of mature lipoproteins. This chain is Phosphatidylglycerol--prolipoprotein diacylglyceryl transferase, found in Ruegeria pomeroyi (strain ATCC 700808 / DSM 15171 / DSS-3) (Silicibacter pomeroyi).